The sequence spans 158 residues: SsrA-binding protein (158 aa).

It belongs to the SmpB family.

It localises to the cytoplasm. Required for rescue of stalled ribosomes mediated by trans-translation. Binds to transfer-messenger RNA (tmRNA), required for stable association of tmRNA with ribosomes. tmRNA and SmpB together mimic tRNA shape, replacing the anticodon stem-loop with SmpB. tmRNA is encoded by the ssrA gene; the 2 termini fold to resemble tRNA(Ala) and it encodes a 'tag peptide', a short internal open reading frame. During trans-translation Ala-aminoacylated tmRNA acts like a tRNA, entering the A-site of stalled ribosomes, displacing the stalled mRNA. The ribosome then switches to translate the ORF on the tmRNA; the nascent peptide is terminated with the 'tag peptide' encoded by the tmRNA and targeted for degradation. The ribosome is freed to recommence translation, which seems to be the essential function of trans-translation. In Roseiflexus sp. (strain RS-1), this protein is SsrA-binding protein.